Reading from the N-terminus, the 306-residue chain is 4-hydroxy-tetrahydrodipicolinate synthase (306 aa).

Pyruvate is bound at residue T46. Y134 functions as the Proton donor/acceptor in the catalytic mechanism. K162 acts as the Schiff-base intermediate with substrate in catalysis. V204 lines the pyruvate pocket.

This sequence belongs to the DapA family. As to quaternary structure, homotetramer; dimer of dimers.

It localises to the cytoplasm. The catalysed reaction is L-aspartate 4-semialdehyde + pyruvate = (2S,4S)-4-hydroxy-2,3,4,5-tetrahydrodipicolinate + H2O + H(+). It participates in amino-acid biosynthesis; L-lysine biosynthesis via DAP pathway; (S)-tetrahydrodipicolinate from L-aspartate: step 3/4. Functionally, catalyzes the condensation of (S)-aspartate-beta-semialdehyde [(S)-ASA] and pyruvate to 4-hydroxy-tetrahydrodipicolinate (HTPA). The chain is 4-hydroxy-tetrahydrodipicolinate synthase from Synechococcus sp. (strain JA-2-3B'a(2-13)) (Cyanobacteria bacterium Yellowstone B-Prime).